The chain runs to 267 residues: Small ribosomal subunit protein uS3 (267 aa).

In terms of domain architecture, KH type-2 spans 43-111 (IRKEMSKDLE…QVQLNIFEVK (69 aa)). The disordered stretch occupies residues 216–267 (FEEQQAQQNNRPGRRGGDRRPRRGNRSAAPQAAEAPKAEAPAEAAPAAETKE). Residues 241-267 (RSAAPQAAEAPKAEAPAEAAPAAETKE) show a composition bias toward low complexity.

This sequence belongs to the universal ribosomal protein uS3 family. As to quaternary structure, part of the 30S ribosomal subunit. Forms a tight complex with proteins S10 and S14.

Its function is as follows. Binds the lower part of the 30S subunit head. Binds mRNA in the 70S ribosome, positioning it for translation. In Bifidobacterium longum subsp. infantis (strain ATCC 15697 / DSM 20088 / JCM 1222 / NCTC 11817 / S12), this protein is Small ribosomal subunit protein uS3.